The sequence spans 391 residues: Elongation factor Tu 2 (391 aa).

Residues 10-201 (KPHVNIGTIG…EVDNYIPTPE (192 aa)) enclose the tr-type G domain. Residues 19 to 26 (GHVDHGKT) are G1. GTP is bound at residue 19–26 (GHVDHGKT). Threonine 26 is a Mg(2+) binding site. Residues 55-59 (GITIS) are G2. The segment at 76–79 (DCPG) is G3. GTP contacts are provided by residues 76 to 80 (DCPGH) and 131 to 134 (NKVD). The segment at 131–134 (NKVD) is G4. Positions 169 to 171 (SAL) are G5.

This sequence belongs to the TRAFAC class translation factor GTPase superfamily. Classic translation factor GTPase family. EF-Tu/EF-1A subfamily. Monomer.

The protein localises to the cytoplasm. The catalysed reaction is GTP + H2O = GDP + phosphate + H(+). Functionally, GTP hydrolase that promotes the GTP-dependent binding of aminoacyl-tRNA to the A-site of ribosomes during protein biosynthesis. The polypeptide is Elongation factor Tu 2 (Bartonella quintana (strain Toulouse) (Rochalimaea quintana)).